A 374-amino-acid polypeptide reads, in one-letter code: Pectate lyase 1 (374 aa).

The N-terminal stretch at 1–21 (MDSPCLVALLVFSFVIGSCFS) is a signal peptide. Intrachain disulfides connect Cys28–Cys45 and Cys128–Cys147. The N-linked (GlcNAc...) asparagine glycan is linked to Asn158. Asp170 is a binding site for Ca(2+). Asn191 carries N-linked (GlcNAc...) (complex) asparagine glycosylation. Asp194 and Asp198 together coordinate Ca(2+). Residue Arg250 is part of the active site. A glycan (N-linked (GlcNAc...) asparagine) is linked at Asn293. Cys306 and Cys312 are joined by a disulfide. The N-linked (GlcNAc...) (complex) asparagine glycan is linked to Asn354.

This sequence belongs to the polysaccharide lyase 1 family. Amb a subfamily. Ca(2+) is required as a cofactor. Post-translationally, N-glycosylated; contains fucose and xylose.

The catalysed reaction is Eliminative cleavage of (1-&gt;4)-alpha-D-galacturonan to give oligosaccharides with 4-deoxy-alpha-D-galact-4-enuronosyl groups at their non-reducing ends.. The protein operates within glycan metabolism; pectin degradation; 2-dehydro-3-deoxy-D-gluconate from pectin: step 2/5. Has pectate lyase activity. This is Pectate lyase 1 from Cryptomeria japonica (Japanese cedar).